Consider the following 882-residue polypeptide: Bifunctional heparan sulfate N-deacetylase/N-sulfotransferase 1 (882 aa).

The Cytoplasmic portion of the chain corresponds to 1-17; it reads MPALACLRRLCRHLSPQ. A sufficient for localization to Golgi membrane region spans residues 1–169; that stretch reads MPALACLRRL…VAYGVGIIGF (169 aa). Residues 18–38 traverse the membrane as a helical; Signal-anchor for type II membrane protein segment; that stretch reads AVLFLLFVFCLFSVFVSAYYL. Over 39–882 the chain is Lumenal; that stretch reads YGWNRGLEPS…WLREDLQNTR (844 aa). Residues 40 to 598 are heparan sulfate N-deacetylase 1; it reads GWNRGLEPSA…KRHKDIWSKE (559 aa). Asn231, Asn351, and Asn401 each carry an N-linked (GlcNAc...) asparagine glycan. The segment at 599 to 882 is heparan sulfate N-sulfotransferase 1; it reads KTCDRFPKLL…WLREDLQNTR (284 aa). Catalysis depends on Lys614, which acts as the For sulfotransferase activity. 614–618 is an adenosine 3',5'-bisphosphate binding site; it reads KTGTT. N-linked (GlcNAc...) asparagine glycosylation is present at Asn667. Adenosine 3',5'-bisphosphate-binding residues include Ser712 and Trp817. Cys818 and Cys828 are disulfide-bonded. 833–837 contacts adenosine 3',5'-bisphosphate; sequence KGRKY.

It belongs to the sulfotransferase 1 family. NDST subfamily. In terms of assembly, monomer. Interacts with heparan sulfate co-polymerase subunits EXT1 and EXT2. In terms of tissue distribution, widely expressed in adult and throughout development.

The protein localises to the golgi apparatus membrane. It localises to the golgi apparatus. Its subcellular location is the trans-Golgi network membrane. The protein resides in the cis-Golgi network membrane. The catalysed reaction is N-acetyl-alpha-D-glucosaminyl-[heparan sulfate](n) + H2O = alpha-D-glucosaminyl-[heparan sulfate](n) + acetate. The enzyme catalyses alpha-D-glucosaminyl-[heparan sulfate](n) + 3'-phosphoadenylyl sulfate = N-sulfo-alpha-D-glucosaminyl-[heparan sulfate](n) + adenosine 3',5'-bisphosphate + 2 H(+). The protein operates within glycan metabolism; heparan sulfate biosynthesis. It participates in glycan metabolism; heparin biosynthesis. With respect to regulation, inhibited by long N-sulfated sequences (more than 6 sugar residues) accumulating in its substrates heparan sulfate, and heparin. Functionally, essential bifunctional enzyme that catalyzes both the N-deacetylation and the N-sulfation of glucosamine (GlcNAc) of the glycosaminoglycan in heparan sulfate. Modifies the GlcNAc-GlcA disaccharide repeating sugar backbone to make N-sulfated heparosan, a prerequisite substrate for later modifications in heparin biosynthesis. Plays a role in determining the extent and pattern of sulfation of heparan sulfate. Participates in biosynthesis of heparan sulfate that can ultimately serve as L-selectin ligands, thereby playing a role in inflammatory response. Required for the exosomal release of SDCBP, CD63 and syndecan. This Mus musculus (Mouse) protein is Bifunctional heparan sulfate N-deacetylase/N-sulfotransferase 1.